A 117-amino-acid polypeptide reads, in one-letter code: Small ribosomal subunit protein bS6 (117 aa).

A disordered region spans residues 97 to 117; that stretch reads TEEPSAILTKKDDRRGRRERN.

It belongs to the bacterial ribosomal protein bS6 family.

Its function is as follows. Binds together with bS18 to 16S ribosomal RNA. This Maricaulis maris (strain MCS10) (Caulobacter maris) protein is Small ribosomal subunit protein bS6.